The primary structure comprises 470 residues: Probable V-type proton ATPase subunit H 2 (470 aa).

Belongs to the V-ATPase H subunit family. In terms of assembly, V-ATPase is a heteromultimeric enzyme made up of two complexes: the ATP-hydrolytic V1 complex and the proton translocation V0 complex. The V1 complex consists of three catalytic AB heterodimers that form a heterohexamer, three peripheral stalks each consisting of EG heterodimers, one central rotor including subunits D and F, and the regulatory subunits C and H. The proton translocation complex V0 consists of the proton transport subunit a, a ring of proteolipid subunits c9c'', rotary subunit d, subunits e and f, and the accessory subunits vah-19/Ac45 and vah-20/PRR.

Functionally, subunit of the V1 complex of vacuolar(H+)-ATPase (V-ATPase), a multisubunit enzyme composed of a peripheral complex (V1) that hydrolyzes ATP and a membrane integral complex (V0) that translocates protons. V-ATPase is responsible for acidifying and maintaining the pH of intracellular compartments and in some cell types, is targeted to the plasma membrane, where it is responsible for acidifying the extracellular environment. Subunit H is essential for V-ATPase activity, but not for the assembly of the complex. The sequence is that of Probable V-type proton ATPase subunit H 2 from Caenorhabditis elegans.